The following is a 72-amino-acid chain: Late control gene B protein (72 aa).

The polypeptide is Late control gene B protein (B) (Escherichia phage 186 (Bacteriophage 186)).